The primary structure comprises 138 residues: Nanos homolog 2 (138 aa).

Residues 31–55 (ETQEIEEPSPGPPLGQDQGLGAPGA) are disordered. The segment at 62–116 (LCNFCKHNGESRHVYSSHQLKTPDGVVVCPILRHYVCPVCGATGDQAHTLKYCPL) adopts a Nanos-type zinc-finger fold. 8 residues coordinate Zn(2+): Cys63, Cys66, His79, Cys90, Cys98, Cys101, His109, and Cys114. Short sequence motifs (C2HC) lie at residues 63-90 (CNFC…VVVC) and 98-114 (CPVC…LKYC).

Belongs to the nanos family. As to quaternary structure, interacts with CNOT1, CNOT3, CNOT6L, CNOT7 and CNOT9. As to expression, testis and ovary. Expression found in several spermatogenic stages: in cells on the periphery of the tubules which could correspond to spermatogonia, in spermatocytes and in round spermatids (at protein level).

Its subcellular location is the cytoplasm. It localises to the P-body. The protein localises to the perinuclear region. Plays a key role in the sexual differentiation of germ cells by promoting the male fate but suppressing the female fate. Represses the female fate pathways by suppressing meiosis, which in turn results in the promotion of the male fate. Maintains the suppression of meiosis by preventing STRA8 expression, which is required for premeiotic DNA replication, after CYP26B1 is decreased. Regulates the localization of the CCR4-NOT deadenylation complex to P-bodies and plays a role in recruiting the complex to trigger the degradation of mRNAs involved in meiosis. Required for the maintenance of the spermatogonial stem cell population. Not essential for the assembly of P-bodies but is required for the maintenance of their normal state. In Homo sapiens (Human), this protein is Nanos homolog 2 (NANOS2).